The primary structure comprises 519 residues: Ribonuclease Y (519 aa).

The chain crosses the membrane as a helical span at residues 3-23; sequence LMIFAYIAIGAVLGAGTGYLL. The 64-residue stretch at 209 to 272 folds into the KH domain; that stretch reads TVTAVTLPSE…QVAKMALERL (64 aa). Positions 335 to 428 constitute an HD domain; that stretch reads VLQHSLEVSA…VQAADSISGA (94 aa).

Belongs to the RNase Y family.

It is found in the cell membrane. Its function is as follows. Endoribonuclease that initiates mRNA decay. This is Ribonuclease Y from Nitratidesulfovibrio vulgaris (strain ATCC 29579 / DSM 644 / CCUG 34227 / NCIMB 8303 / VKM B-1760 / Hildenborough) (Desulfovibrio vulgaris).